Consider the following 1253-residue polypeptide: Cytoplasmic FMR1-interacting protein 2 (1253 aa).

An N6-acetyllysine modification is found at lysine 1037.

Belongs to the CYFIP family. In terms of assembly, component of the WAVE1 complex composed of ABI2, CYFIP2, BRK1, NCKAP1 and WASF1/WAVE1. Interacts with RAC1 (activated form) which causes the complex to dissociate, releasing activated WASF1. The complex can also be activated by NCK1. Interacts with SHANK3; the interaction mediates the association of SHANK3 with the WAVE1 complex. Interacts with FMR1; the interaction occurs in a RNA-dependent manner. Interacts with FXR1 and FXR2. Interacts with TMEM108 (via N-terminus); the interaction associates TMEM108 with the WAVE1 complex.

Its subcellular location is the cytoplasm. It is found in the nucleus. The protein localises to the perinuclear region. It localises to the synapse. The protein resides in the synaptosome. In terms of biological role, involved in T-cell adhesion and p53-dependent induction of apoptosis. Does not bind RNA. As component of the WAVE1 complex, required for BDNF-NTRK2 endocytic trafficking and signaling from early endosomes. The sequence is that of Cytoplasmic FMR1-interacting protein 2 from Pongo abelii (Sumatran orangutan).